A 460-amino-acid chain; its full sequence is Chromosomal replication initiator protein DnaA (460 aa).

Residues 1-84 (MAVSLWQQCI…RFDIGSRPSA (84 aa)) form a domain I, interacts with DnaA modulators region. The domain II stretch occupies residues 84–123 (AKKPEPAPVAAVRVPSPQTKASVGTAFNTTEPVANTNHRS). Residues 124–340 (NINPTYQFDN…GALNRVIANA (217 aa)) form a domain III, AAA+ region region. ATP is bound by residues G168, G170, K171, and T172. Positions 341–460 (NFTGRPITID…YANLIRTLSS (120 aa)) are domain IV, binds dsDNA.

The protein belongs to the DnaA family. Oligomerizes as a right-handed, spiral filament on DNA at oriC.

It localises to the cytoplasm. In terms of biological role, plays an essential role in the initiation and regulation of chromosomal replication. ATP-DnaA binds to the origin of replication (oriC) to initiate formation of the DNA replication initiation complex once per cell cycle. Binds the DnaA box (a 9 base pair repeat at the origin) and separates the double-stranded (ds)DNA. Forms a right-handed helical filament on oriC DNA; dsDNA binds to the exterior of the filament while single-stranded (ss)DNA is stabiized in the filament's interior. The ATP-DnaA-oriC complex binds and stabilizes one strand of the AT-rich DNA unwinding element (DUE), permitting loading of DNA polymerase. After initiation quickly degrades to an ADP-DnaA complex that is not apt for DNA replication. Binds acidic phospholipids. This chain is Chromosomal replication initiator protein DnaA, found in Shewanella oneidensis (strain ATCC 700550 / JCM 31522 / CIP 106686 / LMG 19005 / NCIMB 14063 / MR-1).